A 488-amino-acid chain; its full sequence is MSTPVANASASSMPELLNNPVTIPAVMFIFGVVGNLVAIVVLCKSRKEQKETTFYTLVCGLAVTDLLGTLLVSPVTIATYMKGQWPGGQALCDYSTFILLFFGLSGLSIICAMSIERYLAINHAYFYSHYVDKRLAGLTLFAVYASNVLFCALPNMGLGRSRLQFPDTWCFIDWRTNVTAHAAFSYMYAGFSSFLILATVLCNVLVCGALLRMHRQFMRRTSLGTEQHHAAAAAAVTSAACRGHPTASPALPRLSDFRRRRSFRRIAGAEIQMVILLIATSLVVLICSIPLVVRVFINQLYQPDLVREISQNPDLQAIRIASVNPILDPWIYILLRKTVLSKAIEKIKCLFCRIGGSRRDRSGQHCSDSRRTSSAMSTHSRSFLSRELKEISSTSQTLLYLPELSENSLAGRNLLPGVPLVGLAQADTTSLRTWRGSETSDSSQGQDSESVLLVDEVGGGGRAGPTPKGSSLQVTFPSETLNLSEKCI.

Residues methionine 1–asparagine 19 lie on the Extracellular side of the membrane. N-linked (GlcNAc...) asparagine glycosylation is present at asparagine 7. The chain crosses the membrane as a helical span at residues proline 20–cysteine 43. Topologically, residues lysine 44–tyrosine 55 are cytoplasmic. The chain crosses the membrane as a helical span at residues threonine 56–threonine 79. At tyrosine 80–threonine 96 the chain is on the extracellular side. Residues cysteine 92 and cysteine 170 are joined by a disulfide bond. The chain crosses the membrane as a helical span at residues phenylalanine 97–isoleucine 115. Over glutamate 116 to leucine 135 the chain is Cytoplasmic. The helical transmembrane segment at alanine 136 to arginine 160 threads the bilayer. At serine 161–phenylalanine 184 the chain is on the extracellular side. N-linked (GlcNAc...) asparagine glycosylation occurs at asparagine 177. The helical transmembrane segment at serine 185–leucine 211 threads the bilayer. At arginine 212 to glutamate 270 the chain is on the cytoplasmic side. Residues isoleucine 271–asparagine 298 form a helical membrane-spanning segment. Residues glutamine 299–leucine 315 are Extracellular-facing. A helical transmembrane segment spans residues glutamine 316 to leucine 335. The Cytoplasmic segment spans residues arginine 336–isoleucine 488. The segment covering arginine 358–arginine 371 has biased composition (basic and acidic residues). The segment at arginine 358 to arginine 381 is disordered. Residues threonine 372–arginine 381 are compositionally biased toward polar residues. Residues serine 377, serine 380, serine 382, and serine 385 each carry the phosphoserine modification. Residues glutamate 456–threonine 475 form a disordered region.

It belongs to the G-protein coupled receptor 1 family. In terms of assembly, interacts with FEM1A. In terms of processing, phosphorylation mediates agonist-mediated desensitization by promoting cytoplasmic retention. As to expression, highly expressed in intestine, duodenal epithelium, uterus, thymus and adrenal cortex. Lower but significant expression in whole adrenal, lung, spleen, stomach, and kidney. In this latter organ, the receptor is localized in the glomeruli and the transitional epithelium of the renal calyx.

It localises to the cell membrane. In terms of biological role, receptor for prostaglandin E2 (PGE2). The activity of this receptor is mediated by G(s) proteins that stimulate adenylate cyclase. Has a relaxing effect on smooth muscle. May play an important role in regulating renal hemodynamics, intestinal epithelial transport, adrenal aldosterone secretion, and uterine function. The protein is Prostaglandin E2 receptor EP4 subtype (PTGER4) of Oryctolagus cuniculus (Rabbit).